The chain runs to 455 residues: Beta-1,4-mannosyltransferase bre-3 (455 aa).

It belongs to the glycosyltransferase 2 family. Endothelial cells.

The protein localises to the cytoplasm. The protein operates within protein modification; protein glycosylation. Functionally, glycosyltransferase with a proposed role in glycosphingolipid biosynthesis. Involved in susceptibility to pore-forming crystal toxins in conjunction with bre-1, bre-2, bre-4 and bre-5. Involved in resistance to the nematotoxic C.cinerea galectin Cgl2. Has a role in determining brood size. The polypeptide is Beta-1,4-mannosyltransferase bre-3 (bre-3) (Caenorhabditis elegans).